A 308-amino-acid chain; its full sequence is tRNA dimethylallyltransferase 1 (308 aa).

9-16 (GPTGVGKT) lines the ATP pocket. Substrate is bound at residue 11-16 (TGVGKT). The tract at residues 34 to 37 (DSRQ) is interaction with substrate tRNA.

Belongs to the IPP transferase family. Monomer. The cofactor is Mg(2+).

It carries out the reaction adenosine(37) in tRNA + dimethylallyl diphosphate = N(6)-dimethylallyladenosine(37) in tRNA + diphosphate. In terms of biological role, catalyzes the transfer of a dimethylallyl group onto the adenine at position 37 in tRNAs that read codons beginning with uridine, leading to the formation of N6-(dimethylallyl)adenosine (i(6)A). The protein is tRNA dimethylallyltransferase 1 of Bacteroides thetaiotaomicron (strain ATCC 29148 / DSM 2079 / JCM 5827 / CCUG 10774 / NCTC 10582 / VPI-5482 / E50).